The sequence spans 161 residues: Regulator of ribonuclease activity A (161 aa).

Belongs to the RraA family. In terms of assembly, homotrimer. Binds to both RNA-binding sites in the C-terminal region of Rne and to RhlB.

The protein resides in the cytoplasm. Globally modulates RNA abundance by binding to RNase E (Rne) and regulating its endonucleolytic activity. Can modulate Rne action in a substrate-dependent manner by altering the composition of the degradosome. Modulates RNA-binding and helicase activities of the degradosome. The protein is Regulator of ribonuclease activity A of Escherichia fergusonii (strain ATCC 35469 / DSM 13698 / CCUG 18766 / IAM 14443 / JCM 21226 / LMG 7866 / NBRC 102419 / NCTC 12128 / CDC 0568-73).